The chain runs to 121 residues: Large ribosomal subunit protein bL20 (121 aa).

This sequence belongs to the bacterial ribosomal protein bL20 family.

Binds directly to 23S ribosomal RNA and is necessary for the in vitro assembly process of the 50S ribosomal subunit. It is not involved in the protein synthesizing functions of that subunit. The protein is Large ribosomal subunit protein bL20 of Moorella thermoacetica (strain ATCC 39073 / JCM 9320).